Reading from the N-terminus, the 435-residue chain is Serine--tRNA ligase (435 aa).

238 to 240 contributes to the L-serine binding site; the sequence is TAE. 269-271 provides a ligand contact to ATP; sequence RAE. Glu-292 is an L-serine binding site. 356-359 is a binding site for ATP; the sequence is EISS. Ser-392 contributes to the L-serine binding site.

It belongs to the class-II aminoacyl-tRNA synthetase family. Type-1 seryl-tRNA synthetase subfamily. As to quaternary structure, homodimer. The tRNA molecule binds across the dimer.

The protein resides in the cytoplasm. It carries out the reaction tRNA(Ser) + L-serine + ATP = L-seryl-tRNA(Ser) + AMP + diphosphate + H(+). The catalysed reaction is tRNA(Sec) + L-serine + ATP = L-seryl-tRNA(Sec) + AMP + diphosphate + H(+). Its pathway is aminoacyl-tRNA biosynthesis; selenocysteinyl-tRNA(Sec) biosynthesis; L-seryl-tRNA(Sec) from L-serine and tRNA(Sec): step 1/1. Functionally, catalyzes the attachment of serine to tRNA(Ser). Is also able to aminoacylate tRNA(Sec) with serine, to form the misacylated tRNA L-seryl-tRNA(Sec), which will be further converted into selenocysteinyl-tRNA(Sec). This is Serine--tRNA ligase from Methylobacterium sp. (strain 4-46).